A 353-amino-acid polypeptide reads, in one-letter code: Protein RecA (353 aa).

67–74 (GPESSGKT) provides a ligand contact to ATP.

Belongs to the RecA family.

It is found in the cytoplasm. Its function is as follows. Can catalyze the hydrolysis of ATP in the presence of single-stranded DNA, the ATP-dependent uptake of single-stranded DNA by duplex DNA, and the ATP-dependent hybridization of homologous single-stranded DNAs. It interacts with LexA causing its activation and leading to its autocatalytic cleavage. The sequence is that of Protein RecA from Shewanella loihica (strain ATCC BAA-1088 / PV-4).